The following is a 357-amino-acid chain: DNA integrity scanning protein DisA (357 aa).

The DAC domain maps to Val-8 to Ile-146. ATP contacts are provided by residues Gly-75, Leu-93, and Met-106 to Thr-110.

It belongs to the DisA family. In terms of assembly, homooctamer. The cofactor is Mg(2+).

The enzyme catalyses 2 ATP = 3',3'-c-di-AMP + 2 diphosphate. Its function is as follows. Participates in a DNA-damage check-point that is active prior to asymmetric division when DNA is damaged. DisA forms globular foci that rapidly scan along the chromosomes during sporulation, searching for lesions. When a lesion is present, DisA pauses at the lesion site. This triggers a cellular response that culminates in a temporary block in sporulation initiation. Also has diadenylate cyclase activity, catalyzing the condensation of 2 ATP molecules into cyclic di-AMP (c-di-AMP). c-di-AMP acts as a signaling molecule that couples DNA integrity with progression of sporulation. The rise in c-di-AMP level generated by DisA while scanning the chromosome, operates as a positive signal that advances sporulation; upon encountering a lesion, the DisA focus arrests at the damaged site and halts c-di-AMP synthesis. The polypeptide is DNA integrity scanning protein DisA (Bacillus anthracis (strain CDC 684 / NRRL 3495)).